The following is a 447-amino-acid chain: Tubulin beta-2 chain (447 aa).

Glutamine 9, glutamate 67, serine 136, glycine 140, threonine 141, glycine 142, asparagine 202, and asparagine 224 together coordinate GTP. Glutamate 67 is a binding site for Mg(2+). Positions 411-425 (SNMNDLVSEYQQYQD) are enriched in polar residues. Residues 411-447 (SNMNDLVSEYQQYQDATAEEDEYEEEEEDYHQEHDEM) form a disordered region. Acidic residues predominate over residues 427-440 (TAEEDEYEEEEEDY).

It belongs to the tubulin family. As to quaternary structure, dimer of alpha and beta chains. A typical microtubule is a hollow water-filled tube with an outer diameter of 25 nm and an inner diameter of 15 nM. Alpha-beta heterodimers associate head-to-tail to form protofilaments running lengthwise along the microtubule wall with the beta-tubulin subunit facing the microtubule plus end conferring a structural polarity. Microtubules usually have 13 protofilaments but different protofilament numbers can be found in some organisms and specialized cells. Mg(2+) is required as a cofactor.

Its subcellular location is the cytoplasm. It localises to the cytoskeleton. Tubulin is the major constituent of microtubules, a cylinder consisting of laterally associated linear protofilaments composed of alpha- and beta-tubulin heterodimers. Microtubules grow by the addition of GTP-tubulin dimers to the microtubule end, where a stabilizing cap forms. Below the cap, tubulin dimers are in GDP-bound state, owing to GTPase activity of alpha-tubulin. This Pisum sativum (Garden pea) protein is Tubulin beta-2 chain (TUBB2).